The primary structure comprises 129 residues: Sm-like protein LSM4 (129 aa).

Residues leucine 2–valine 75 enclose the Sm domain. The segment covering valine 79–proline 90 has biased composition (basic and acidic residues). Residues valine 79–glycine 129 form a disordered region. The segment covering arginine 111 to glycine 129 has biased composition (gly residues).

Belongs to the snRNP Sm proteins family. In terms of assembly, component of the heptameric LSM1-LSM7 complex that forms a seven-membered ring structure with a donut shape. The LSM subunits are arranged in the order LSM1, LSM2, LSM3, LSM6, LSM5, LSM7 and LSM4. LSM4 subunit interacts only with its two neighboring subunits, LSM1A or LSM1B and LSM7. Component of the heptameric LSM2-LSM8 complex that forms a seven-membered ring structure with a donut shape. The LSM subunits are arranged in the order LSM8, LSM2, LSM3, LSM6, LSM5, LSM7 and LSM4. LSM4 subunit interacts only with its two neighboring subunits, LSM8 and LSM7. Methylated by PMRT15/SKB1 in response to salt stress or abscisic acid (ABA) treatment. In terms of tissue distribution, expressed in roots, leaves, stems, flowers and siliques.

Its subcellular location is the cytoplasm. It is found in the nucleus. Its function is as follows. Component of LSM protein complexes, which are involved in RNA processing. Component of the cytoplasmic LSM1-LSM7 complex which is involved in mRNA degradation by promoting decapping and leading to accurate 5'-3' mRNA decay. The cytoplasmic LSM1-LSM7 complex regulates developmental gene expression by the decapping of specific development-related transcripts. Component of the nuclear LSM2-LSM8 complex which is involved splicing nuclear mRNAs. LSM2-LSM8 binds directly to the U6 small nuclear RNAs (snRNAs) and is essential for accurate splicing of selected development-related mRNAs through the stabilization of the spliceosomal U6 snRNA. Plays a critical role in the regulation of development-related gene expression. This is Sm-like protein LSM4 from Arabidopsis thaliana (Mouse-ear cress).